The chain runs to 369 residues: tRNA/tmRNA (uracil-C(5))-methyltransferase (369 aa).

S-adenosyl-L-methionine is bound by residues glutamine 193, tyrosine 221, asparagine 226, glutamate 242, and aspartate 302. The active-site Nucleophile is the cysteine 327. Glutamate 361 serves as the catalytic Proton acceptor.

The protein belongs to the class I-like SAM-binding methyltransferase superfamily. RNA M5U methyltransferase family. TrmA subfamily.

The catalysed reaction is uridine(54) in tRNA + S-adenosyl-L-methionine = 5-methyluridine(54) in tRNA + S-adenosyl-L-homocysteine + H(+). It catalyses the reaction uridine(341) in tmRNA + S-adenosyl-L-methionine = 5-methyluridine(341) in tmRNA + S-adenosyl-L-homocysteine + H(+). Functionally, dual-specificity methyltransferase that catalyzes the formation of 5-methyluridine at position 54 (m5U54) in all tRNAs, and that of position 341 (m5U341) in tmRNA (transfer-mRNA). This chain is tRNA/tmRNA (uracil-C(5))-methyltransferase, found in Sulfurimonas denitrificans (strain ATCC 33889 / DSM 1251) (Thiomicrospira denitrificans (strain ATCC 33889 / DSM 1251)).